The sequence spans 1876 residues: Vitellogenin-2 (1876 aa).

The N-terminal stretch at 1-16 (MMWKTLLCCLLAVSAA) is a signal peptide. A Vitellogenin domain is found at 21-838 (WEPGKRYEYH…SRDSFMPKSV (818 aa)). Asn-211 and Asn-290 each carry an N-linked (GlcNAc...) asparagine glycan. The interval 322 to 424 (TGEPSQRDSA…SSSSSSEEYL (103 aa)) is disordered. Low complexity-rich tracts occupy residues 330–368 (SAYA…SSSR) and 387–404 (SQPR…SKRS). An N-linked (GlcNAc...) asparagine glycan is attached at Asn-409. Residues 411–420 (SSSSSSSSSS) show a composition bias toward low complexity. Asn-595, Asn-631, Asn-932, Asn-1012, and Asn-1055 each carry an N-linked (GlcNAc...) asparagine glycan. The segment at 1192 to 1239 (SYDNRYTQPEEEEETRQHSKIRRPRSASRKHRRSRHEERAPLENLEVS) is disordered. Residues 1209–1225 (HSKIRRPRSASRKHRRS) are compositionally biased toward basic residues. 10 N-linked (GlcNAc...) asparagine glycosylation sites follow: Asn-1318, Asn-1398, Asn-1417, Asn-1424, Asn-1469, Asn-1532, Asn-1636, Asn-1719, Asn-1760, and Asn-1770. Positions 1518–1703 (PTCVVDYSKV…TLVRDLDRSR (186 aa)) constitute a VWFD domain. Cysteines 1520 and 1664 form a disulfide. The tract at residues 1729-1788 (SGIRPYDIDDDSSSSSSSSSSSSSSSSSSKSNSTSSSSSESNESALPRGENKLHRAQQPS) is disordered. The span at 1741-1772 (SSSSSSSSSSSSSSSSSKSNSTSSSSSESNES) shows a compositional bias: low complexity.

The protein localises to the secreted. Precursor of the egg-yolk proteins that are sources of nutrients during embryonic development. The protein is Vitellogenin-2 (VG2) of Periplaneta americana (American cockroach).